Here is a 585-residue protein sequence, read N- to C-terminus: MRRYMVTYAWQLLKKELGLYQFATDIIVMIRVCKMFRQGLRGFREYQIIESAHWKHPIFSFWDKKIQSRVTFDTMDFIAEEGHFPPKAIQIMQKKPSWRTEDEIQTVCNILQVLDSYRNYAEPLQLLLAKVMRFERFGRRRVIIKKGQKGNSFYFIYLGTVAITNDEDGSSAFLDPHPKLLQKGSCFGETDIQHASLRRSTIVCMEETEFLVVDREDFFANKLDQEVQKDAQYRFEFFRKMDLFASWSDEKLWQLVNMSKIERFSYGQLISKDFGESSFIMFISKGSCEVLRLLDLGASPSYHRWVWQHLELIDDRPLKTHLREYSPMERFKEFQIKSYPLQDFSSLKLLHLKKAWGLQGTSFSRKIGTSGDTLPKMLGPKIQSRPVQSIKCAMINTKFGELPKEAAVGAYMKVHTVEQGEILGLHQAFLPEGECDTRPLILMSLGNELIRIRKEIFYELIDNDDEMIKKLLKLNIAFPSDEDMCQKFLQENSWNIFRKDLLRLLVEPRQSPPFPPIRPKKKEIYNPKSVVLDLCSINKTTKPRYPIFMAPQKYLPPLRIVQAIKAPRYKIQELLPQYKSAGVLI.

Ser116–Arg239 contributes to the a nucleoside 3',5'-cyclic phosphate binding site.

It localises to the cytoplasm. The protein localises to the cytosol. Essential for male fertility. Plays an important role in spermatogenesis and regulates sperm motility by controlling the development of the flagellar bending of sperm. The sequence is that of Cyclic nucleotide-binding domain-containing protein 2 (CNBD2) from Macaca fascicularis (Crab-eating macaque).